We begin with the raw amino-acid sequence, 1928 residues long: Myosin-1 (1928 aa).

In terms of domain architecture, Myosin N-terminal SH3-like spans 8-71 (SSNMIVWIPD…RISDVFPVNP (64 aa)). A Myosin motor domain is found at 75–791 (DKVENMSELT…VLADLEKQKD (717 aa)). Position 180-187 (180-187 (GESGAGKT)) interacts with ATP. The actin-binding stretch occupies residues 460-529 (IGLLDIAGFE…LQLTIDLIES (70 aa)). A compositionally biased stretch (polar residues) spans 629-641 (SSSAGVEANISNQ). Residues 629-657 (SSSAGVEANISNQEVKKSARTSTFKTTSS) form a disordered region. The region spanning 794 to 823 (LNNIMIKLTATIRGYTVRKEITYHLQKLKK) is the IQ domain. Residues 856-1911 (SSNDMTRTKK…FWKSRYESTM (1056 aa)) are a coiled coil.

It belongs to the TRAFAC class myosin-kinesin ATPase superfamily. Myosin family.

Required for cell division. The chain is Myosin-1 (MYO1) from Saccharomyces cerevisiae (strain ATCC 204508 / S288c) (Baker's yeast).